Reading from the N-terminus, the 240-residue chain is MATKIFSLLMLLALSTCVANATIFPQCSQAPIASLLPPYLPSIIASICENPALQPYRLQQAIAASNIPLSPLLFQQSPALSLVQSLVQTIRAQQLQQLVLPLINQVALANLSPYSQQQQFLPFNQLSTLNPAAYLQQQLLPFSQLATAYSQQQQLLPFNQLAALNPAAYLQQQILLPFSQLAAANRASFLTQQQLLPFYQQFAANPATLLQLQQLLPFVQLALTDPAASYQQHIIGGALF.

A signal peptide spans 1 to 21 (MATKIFSLLMLLALSTCVANA).

Belongs to the zein family. Interacts with OP10 (via N-terminus).

In terms of biological role, zeins are major seed storage proteins. This Zea mays (Maize) protein is Zein-alpha 19C2.